The sequence spans 371 residues: Aspartate-semialdehyde dehydrogenase (371 aa).

NADP(+) is bound by residues 11–14 (RGMV), 38–39 (TS), and Gln75. A phosphate-binding site is contributed by Arg104. Catalysis depends on Cys137, which acts as the Acyl-thioester intermediate. Residue Gln164 participates in substrate binding. 167 to 168 (SG) serves as a coordination point for NADP(+). Glu243 is a substrate binding site. Position 246 (Lys246) interacts with phosphate. Arg269 contributes to the substrate binding site. His276 acts as the Proton acceptor in catalysis. NADP(+) is bound at residue Gln352.

Belongs to the aspartate-semialdehyde dehydrogenase family. As to quaternary structure, homodimer.

It catalyses the reaction L-aspartate 4-semialdehyde + phosphate + NADP(+) = 4-phospho-L-aspartate + NADPH + H(+). It participates in amino-acid biosynthesis; L-lysine biosynthesis via DAP pathway; (S)-tetrahydrodipicolinate from L-aspartate: step 2/4. Its pathway is amino-acid biosynthesis; L-methionine biosynthesis via de novo pathway; L-homoserine from L-aspartate: step 2/3. It functions in the pathway amino-acid biosynthesis; L-threonine biosynthesis; L-threonine from L-aspartate: step 2/5. Catalyzes the NADPH-dependent formation of L-aspartate-semialdehyde (L-ASA) by the reductive dephosphorylation of L-aspartyl-4-phosphate. The chain is Aspartate-semialdehyde dehydrogenase from Buchnera aphidicola subsp. Acyrthosiphon pisum (strain APS) (Acyrthosiphon pisum symbiotic bacterium).